The primary structure comprises 672 residues: 2,4-dienoyl-CoA reductase [(2E)-enoyl-CoA-producing] (672 aa).

FMN contacts are provided by residues 25 to 27 (SMH), Gly-59, and Gln-101. Catalysis depends on Tyr-167, which acts as the Proton donor. Arg-176 contacts substrate. Arg-215 lines the FMN pocket. 253 to 256 (HEAR) contacts substrate. Residues Arg-289 and 311–312 (AR) each bind FMN. Residues Cys-335 and Cys-338 each coordinate [4Fe-4S] cluster. Residue Gln-340 coordinates FAD. Gln-340 lines the NADP(+) pocket. Positions 342 and 354 each coordinate [4Fe-4S] cluster. FAD is bound by residues Ala-385, Asp-404, Gln-412, Lys-422, and Val-449. 563–564 (RK) lines the NADP(+) pocket. Residues Lys-567 and Trp-578 each contribute to the substrate site. Residues Gly-649 and 656 to 658 (LDA) contribute to the FAD site. 654-656 (MEL) serves as a coordination point for NADP(+).

It in the N-terminal section; belongs to the NADH:flavin oxidoreductase/NADH oxidase family. As to quaternary structure, monomer. FMN is required as a cofactor. The cofactor is FAD. Requires [4Fe-4S] cluster as cofactor.

The catalysed reaction is a 4,5-saturated-(2E)-enoyl-CoA + NADP(+) = a (2E,4E)-dienoyl-CoA + NADPH + H(+). The enzyme catalyses a (2E,4Z)-dienoyl-CoA + NADPH + H(+) = a 4,5-saturated-(2E)-enoyl-CoA + NADP(+). It catalyses the reaction (2E)-decenoyl-CoA + NADP(+) = (2E,4E)-decadienoyl-CoA + NADPH + H(+). It carries out the reaction (2E)-decenoyl-CoA + NADP(+) = (2E,4Z)-decadienoyl-CoA + NADPH + H(+). It functions in the pathway lipid metabolism; fatty acid beta-oxidation. With respect to regulation, is non-competitively inhibited by NADH. Functions as an auxiliary enzyme in the beta-oxidation of unsaturated fatty acids with double bonds at even carbon positions. Catalyzes the NADPH-dependent reduction of the C4-C5 double bond of the acyl chain of 2,4-dienoyl-CoA to yield 2-trans-enoyl-CoA. Acts on both isomers, 2-trans,4-cis- and 2-trans,4-trans-decadienoyl-CoA, with almost equal efficiency. Is not active with NADH instead of NADPH. Does not show cis-&gt;trans isomerase activity. The protein is 2,4-dienoyl-CoA reductase [(2E)-enoyl-CoA-producing] of Escherichia coli (strain K12).